The sequence spans 91 residues: Acylphosphatase (91 aa).

Residues 5-91 enclose the Acylphosphatase-like domain; it reads RAHLRIYGRV…EGLEGFKVVG (87 aa). Catalysis depends on residues R20 and N38.

It belongs to the acylphosphatase family.

The enzyme catalyses an acyl phosphate + H2O = a carboxylate + phosphate + H(+). This is Acylphosphatase (acyP) from Thermococcus kodakarensis (strain ATCC BAA-918 / JCM 12380 / KOD1) (Pyrococcus kodakaraensis (strain KOD1)).